The following is a 426-amino-acid chain: Deoxyguanosinetriphosphate triphosphohydrolase-like protein (426 aa).

The tract at residues 1-23 is disordered; it reads MYPYSESDAQRLHQEAPKASQLA. Residues 67–217 enclose the HD domain; sequence RLTHSLEVAQ…MDFSDDIAYS (151 aa).

The protein belongs to the dGTPase family. Type 2 subfamily.

In Corynebacterium efficiens (strain DSM 44549 / YS-314 / AJ 12310 / JCM 11189 / NBRC 100395), this protein is Deoxyguanosinetriphosphate triphosphohydrolase-like protein.